We begin with the raw amino-acid sequence, 1164 residues long: DNA-directed RNA polymerase 132 kDa polypeptide (1164 aa).

It belongs to the RNA polymerase beta chain family. In terms of assembly, the DNA-dependent RNA polymerase used for intermediate and late genes expression consists of eight subunits (147) kDa, (133) kDa, (35) kDa, (30) kDa, (22) kDa, (19) kDa, (18) kDa and (7) kDa totalling more than 500 kDa in mass. The same holoenzyme, with the addition of the transcription-specificity factor RAP94, is used for early gene expression.

The protein localises to the virion. It catalyses the reaction RNA(n) + a ribonucleoside 5'-triphosphate = RNA(n+1) + diphosphate. In terms of biological role, part of the DNA-dependent RNA polymerase which catalyzes the transcription of viral DNA into RNA using the four ribonucleoside triphosphates as substrates. Responsible for the transcription of early, intermediate and late genes. DNA-dependent RNA polymerase associates with the early transcription factor (ETF), itself composed of D6 and A7, thereby allowing the early genes transcription. Late transcription, and probably also intermediate transcription, require newly synthesized RNA polymerase. This is DNA-directed RNA polymerase 132 kDa polypeptide (RPO132) from Bos taurus (Bovine).